Consider the following 148-residue polypeptide: uncharacterized protein (148 aa).

The 62-residue stretch at 2 to 63 (LDELDKRILY…LINPFKAGYE (62 aa)) folds into the HTH asnC-type domain. A DNA-binding region (H-T-H motif) is located at residues 21-40 (YSEIARILGVPESTVRVRVK).

This is an uncharacterized protein from Pyrococcus furiosus (strain ATCC 43587 / DSM 3638 / JCM 8422 / Vc1).